The sequence spans 101 residues: MAKKSMKNRELKRQLTVAKFAKKRAELKATIVNLNASPEERFAAVVALQKQPRDASASRLRNRCRLTGRPHGVYRKFGLGRNMLRQAAMRGDVPGLVKASW.

It belongs to the universal ribosomal protein uS14 family. In terms of assembly, part of the 30S ribosomal subunit. Contacts proteins S3 and S10.

Its function is as follows. Binds 16S rRNA, required for the assembly of 30S particles and may also be responsible for determining the conformation of the 16S rRNA at the A site. The chain is Small ribosomal subunit protein uS14 from Pseudomonas putida (strain ATCC 47054 / DSM 6125 / CFBP 8728 / NCIMB 11950 / KT2440).